The primary structure comprises 510 residues: Abscisic acid 8'-hydroxylase 2 (510 aa).

The helical transmembrane segment at 3-23 (FLLFFVFVTAAVLCFVVPAFL) threads the bilayer. Cys441 contacts heme.

The protein belongs to the cytochrome P450 family. The cofactor is heme.

It is found in the membrane. It carries out the reaction 2-cis-(+)-abscisate + reduced [NADPH--hemoprotein reductase] + O2 = (+)-8'-hydroxyabscisate + oxidized [NADPH--hemoprotein reductase] + H2O + H(+). Its pathway is plant hormone degradation; abscisic acid degradation. Its function is as follows. Involved in the oxidative degradation of abscisic acid. This Oryza sativa subsp. japonica (Rice) protein is Abscisic acid 8'-hydroxylase 2 (CYP707A6).